Reading from the N-terminus, the 380-residue chain is NF-kappa-B inhibitor-like protein 1 (380 aa).

Positions Met1–Glu34 are disordered. ANK repeat units follow at residues Gly64–His93 and His97–Lys133. Disordered regions lie at residues Lys131–Gln166 and Gly185–Leu293. Phosphoserine is present on Ser150. Over residues Gln237–Arg286 the composition is skewed to basic and acidic residues.

As to quaternary structure, interacts with CACTIN (via N-terminal domain); the interaction occurs in a pro-inflammatory-independent manner.

The protein resides in the nucleus. Involved in the regulation of innate immune response. Acts as negative regulator of Toll-like receptor and interferon-regulatory factor (IRF) signaling pathways. Contributes to the negative regulation of transcriptional activation of NF-kappa-B target genes in response to endogenous pro-inflammatory stimuli. The sequence is that of NF-kappa-B inhibitor-like protein 1 (NFKBIL1) from Pan troglodytes (Chimpanzee).